The sequence spans 200 residues: ATP-dependent Clp protease proteolytic subunit 2 (200 aa).

The active-site Nucleophile is the serine 96. Histidine 121 is an active-site residue.

It belongs to the peptidase S14 family. Fourteen ClpP subunits assemble into 2 heptameric rings which stack back to back to give a disk-like structure with a central cavity, resembling the structure of eukaryotic proteasomes.

The protein resides in the cytoplasm. The catalysed reaction is Hydrolysis of proteins to small peptides in the presence of ATP and magnesium. alpha-casein is the usual test substrate. In the absence of ATP, only oligopeptides shorter than five residues are hydrolyzed (such as succinyl-Leu-Tyr-|-NHMec, and Leu-Tyr-Leu-|-Tyr-Trp, in which cleavage of the -Tyr-|-Leu- and -Tyr-|-Trp bonds also occurs).. Functionally, cleaves peptides in various proteins in a process that requires ATP hydrolysis. Has a chymotrypsin-like activity. Plays a major role in the degradation of misfolded proteins. This is ATP-dependent Clp protease proteolytic subunit 2 from Synechococcus sp. (strain JA-2-3B'a(2-13)) (Cyanobacteria bacterium Yellowstone B-Prime).